The sequence spans 295 residues: Protoheme IX farnesyltransferase (295 aa).

Helical transmembrane passes span 8 to 28 (ITKP…FFLA), 35 to 55 (GGLF…GCVF), 83 to 103 (GVTL…LWFG), 107 to 127 (LATA…SLYL), 132 to 152 (IYGT…GYCA), 162 to 182 (LTLL…IAIF), 208 to 228 (IFWY…GGYA), 229 to 249 (GYGY…MALR), and 263 to 283 (VFIF…IDFQ).

The protein belongs to the UbiA prenyltransferase family. Protoheme IX farnesyltransferase subfamily.

The protein localises to the cell inner membrane. It carries out the reaction heme b + (2E,6E)-farnesyl diphosphate + H2O = Fe(II)-heme o + diphosphate. Its pathway is porphyrin-containing compound metabolism; heme O biosynthesis; heme O from protoheme: step 1/1. In terms of biological role, converts heme B (protoheme IX) to heme O by substitution of the vinyl group on carbon 2 of heme B porphyrin ring with a hydroxyethyl farnesyl side group. This chain is Protoheme IX farnesyltransferase, found in Chromohalobacter salexigens (strain ATCC BAA-138 / DSM 3043 / CIP 106854 / NCIMB 13768 / 1H11).